The primary structure comprises 486 residues: Cysteine--tRNA ligase (486 aa).

Cys29 contributes to the Zn(2+) binding site. Residues 31 to 41 (VTVYDYCHLGH) carry the 'HIGH' region motif. The Zn(2+) site is built by Cys214, His239, and Glu243. The 'KMSKS' region motif lies at 271–275 (KMSKS). Residue Lys274 participates in ATP binding.

The protein belongs to the class-I aminoacyl-tRNA synthetase family. In terms of assembly, monomer. Zn(2+) serves as cofactor.

It is found in the cytoplasm. It carries out the reaction tRNA(Cys) + L-cysteine + ATP = L-cysteinyl-tRNA(Cys) + AMP + diphosphate. The protein is Cysteine--tRNA ligase of Nostoc sp. (strain PCC 7120 / SAG 25.82 / UTEX 2576).